A 185-amino-acid chain; its full sequence is ADP-ribosylation factor (185 aa).

G2 carries N-myristoyl glycine lipidation. GTP-binding positions include 27 to 34, 70 to 74, and 129 to 132; these read GLDAAGKT, DVGGQ, and NKQD.

This sequence belongs to the small GTPase superfamily. Arf family.

The protein resides in the golgi apparatus. In terms of biological role, GTP-binding protein involved in protein trafficking; may modulate vesicle budding and uncoating within the Golgi apparatus. In Neurospora crassa (strain ATCC 24698 / 74-OR23-1A / CBS 708.71 / DSM 1257 / FGSC 987), this protein is ADP-ribosylation factor.